A 579-amino-acid polypeptide reads, in one-letter code: 2-isopropylmalate synthase (579 aa).

The region spanning 40-314 is the Pyruvate carboxyltransferase domain; it reads PRWCAVDLRD…DPMIDFSDID (275 aa). Mg(2+) is bound by residues aspartate 49, histidine 253, histidine 255, and asparagine 289. The regulatory domain stretch occupies residues 456 to 579; sequence SDEEQAQWGR…VNRAVRDAQA (124 aa).

The protein belongs to the alpha-IPM synthase/homocitrate synthase family. LeuA type 2 subfamily. In terms of assembly, homodimer. It depends on Mg(2+) as a cofactor.

Its subcellular location is the cytoplasm. The catalysed reaction is 3-methyl-2-oxobutanoate + acetyl-CoA + H2O = (2S)-2-isopropylmalate + CoA + H(+). It functions in the pathway amino-acid biosynthesis; L-leucine biosynthesis; L-leucine from 3-methyl-2-oxobutanoate: step 1/4. Its function is as follows. Catalyzes the condensation of the acetyl group of acetyl-CoA with 3-methyl-2-oxobutanoate (2-ketoisovalerate) to form 3-carboxy-3-hydroxy-4-methylpentanoate (2-isopropylmalate). This Paenarthrobacter aurescens (strain TC1) protein is 2-isopropylmalate synthase.